Reading from the N-terminus, the 621-residue chain is Phosphatidylinositol-3,5-bisphosphate 3-phosphatase MTMR6 (621 aa).

The region spanning 1–101 is the GRAM domain; it reads MEHIRTTKVE…YNSLLQLSKQ (101 aa). An interaction with RAB1B region spans residues 2 to 141; the sequence is EHIRTTKVEQ…EEYKRMGVPN (140 aa). Phosphotyrosine is present on Tyr108. The region spanning 124-499 is the Myotubularin phosphatase domain; that stretch reads GWQLIDLAEE…FNFKFWRNMY (376 aa). A 1,2-diacyl-sn-glycero-3-phospho-(1D-myo-inositol-3,5-bisphosphate) contacts are provided by Asn248, Asn273, and Ile274. A 1,2-diacyl-sn-glycero-3-phospho-(1D-myo-inositol-3-phosphate)-binding residues include Asn248, Asn273, and Ile274. Cys336 (phosphocysteine intermediate) is an active-site residue. 8 residues coordinate a 1,2-diacyl-sn-glycero-3-phospho-(1D-myo-inositol-3,5-bisphosphate): Ser337, Asp338, Gly339, Trp340, Asp341, Arg342, Lys378, and Arg382. Positions 337, 338, 339, 340, 341, and 342 each coordinate a 1,2-diacyl-sn-glycero-3-phospho-(1D-myo-inositol-3-phosphate). Position 382 (Arg382) interacts with a 1,2-diacyl-sn-glycero-3-phospho-(1D-myo-inositol-3-phosphate). Residues Ser556, Ser561, Ser589, and Ser611 each carry the phosphoserine modification.

This sequence belongs to the protein-tyrosine phosphatase family. Non-receptor class myotubularin subfamily. As to quaternary structure, homodimer. Heterodimer (via C-terminus) with MTMR9 (via C-terminus). Interacts with ALKBH4. Interacts with KCNN4. Interacts (via GRAM domain) with RAB1B (in GDP-bound form); the interaction regulates MTMR6 recruitment to the endoplasmic reticulum-Golgi intermediate compartment. Expressed in CD4+ T-cells.

Its subcellular location is the cytoplasm. The protein localises to the endoplasmic reticulum-Golgi intermediate compartment. It is found in the endoplasmic reticulum. The protein resides in the cell projection. It localises to the ruffle membrane. Its subcellular location is the perinuclear region. The enzyme catalyses a 1,2-diacyl-sn-glycero-3-phospho-(1D-myo-inositol-3,5-bisphosphate) + H2O = a 1,2-diacyl-sn-glycero-3-phospho-(1D-myo-inositol-5-phosphate) + phosphate. The catalysed reaction is a 1,2-diacyl-sn-glycero-3-phospho-(1D-myo-inositol-3-phosphate) + H2O = a 1,2-diacyl-sn-glycero-3-phospho-(1D-myo-inositol) + phosphate. It carries out the reaction 1,2-dioctanoyl-sn-glycero-3-phospho-(1D-myo-inositol-3,5-bisphosphate) + H2O = 1,2-dioctanoyl-sn-glycero-3-phospho-(1D-myo-inositol-5-phosphate) + phosphate. It catalyses the reaction 1,2-dioctanoyl-sn-glycero-3-phospho-(1-D-myo-inositol-3-phosphate) + H2O = 1,2-dioctanoyl-sn-glycero-3-phospho-(1D-myo-inositol) + phosphate. Its activity is regulated as follows. Allosterically activated by phosphatidylserine and/or phosphatidylinositol 4-phosphate (PtdIns(4)P), and phosphatidylinositol 5-phosphate (PtdIns(5)P). Interaction with MTMR9 increases catalytic activity towards phosphatidylinositol 3,5-bisphosphate. Functionally, lipid phosphatase that specifically dephosphorylates the D-3 position of phosphatidylinositol 3-phosphate and phosphatidylinositol 3,5-bisphosphate, generating phosphatidylinositol and phosphatidylinositol 5-phosphate. Binds with high affinity to phosphatidylinositol 3,5-bisphosphate (PtdIns(3,5)P2) but also to phosphatidylinositol 3-phosphate (PtdIns(3)P), phosphatidylinositol 4-phosphate (PtdIns(4)P), and phosphatidylinositol 5-phosphate (PtdIns(5)P), phosphatidic acid and phosphatidylserine. Negatively regulates ER-Golgi protein transport. Probably in association with MTMR9, plays a role in the late stages of macropinocytosis by dephosphorylating phosphatidylinositol 3-phosphate in membrane ruffles. Acts as a negative regulator of KCNN4/KCa3.1 channel activity in CD4(+) T-cells possibly by decreasing intracellular levels of phosphatidylinositol 3-phosphate. Negatively regulates proliferation of reactivated CD4(+) T-cells. In complex with MTMR9, negatively regulates DNA damage-induced apoptosis. The formation of the MTMR6-MTMR9 complex stabilizes both MTMR6 and MTMR9 protein levels. This Homo sapiens (Human) protein is Phosphatidylinositol-3,5-bisphosphate 3-phosphatase MTMR6.